A 490-amino-acid chain; its full sequence is Cardiolipin synthase 1 (490 aa).

2 consecutive transmembrane segments (helical) span residues 9–29 and 42–62; these read ILTI…FVII and WAWL…YLFL. 2 consecutive PLD phosphodiesterase domains span residues 225–252 and 403–430; these read MNNR…GDDY and QNGF…DFRS. Residues His230, Lys232, Asp237, His408, Lys410, and Asp415 contribute to the active site.

It belongs to the phospholipase D family. Cardiolipin synthase subfamily.

Its subcellular location is the cell membrane. It catalyses the reaction 2 a 1,2-diacyl-sn-glycero-3-phospho-(1'-sn-glycerol) = a cardiolipin + glycerol. Catalyzes the reversible phosphatidyl group transfer from one phosphatidylglycerol molecule to another to form cardiolipin (CL) (diphosphatidylglycerol) and glycerol. The sequence is that of Cardiolipin synthase 1 (cls1) from Staphylococcus epidermidis (strain ATCC 35984 / DSM 28319 / BCRC 17069 / CCUG 31568 / BM 3577 / RP62A).